A 166-amino-acid polypeptide reads, in one-letter code: Large ribosomal subunit protein uL10 (166 aa).

Belongs to the universal ribosomal protein uL10 family. In terms of assembly, part of the ribosomal stalk of the 50S ribosomal subunit. The N-terminus interacts with L11 and the large rRNA to form the base of the stalk. The C-terminus forms an elongated spine to which L12 dimers bind in a sequential fashion forming a multimeric L10(L12)X complex.

In terms of biological role, forms part of the ribosomal stalk, playing a central role in the interaction of the ribosome with GTP-bound translation factors. The protein is Large ribosomal subunit protein uL10 of Tropheryma whipplei (strain TW08/27) (Whipple's bacillus).